An 874-amino-acid chain; its full sequence is Alanine--tRNA ligase (874 aa).

Residues His564, His568, Cys665, and His669 each contribute to the Zn(2+) site.

Belongs to the class-II aminoacyl-tRNA synthetase family. It depends on Zn(2+) as a cofactor.

Its subcellular location is the cytoplasm. The enzyme catalyses tRNA(Ala) + L-alanine + ATP = L-alanyl-tRNA(Ala) + AMP + diphosphate. Its function is as follows. Catalyzes the attachment of alanine to tRNA(Ala) in a two-step reaction: alanine is first activated by ATP to form Ala-AMP and then transferred to the acceptor end of tRNA(Ala). Also edits incorrectly charged Ser-tRNA(Ala) and Gly-tRNA(Ala) via its editing domain. In Paraburkholderia phytofirmans (strain DSM 17436 / LMG 22146 / PsJN) (Burkholderia phytofirmans), this protein is Alanine--tRNA ligase.